Here is a 349-residue protein sequence, read N- to C-terminus: Thiamine thiazole synthase, chloroplastic (349 aa).

A chloroplast-targeting transit peptide spans Met-1–Arg-45. Residues Ala-94, Glu-114–Gln-115, Gly-122, and Ala-187 each bind substrate. Residue Cys-216 is modified to 2,3-didehydroalanine (Cys). Residues Asp-218, His-233, Met-285, and Arg-295–Gly-297 contribute to the substrate site.

It belongs to the THI4 family. Homooctamer. Interacts with RBCX1 and RBCX1. Interacts with CPK33. Fe cation is required as a cofactor. During the catalytic reaction, a sulfide is transferred from Cys-216 to a reaction intermediate, generating a dehydroalanine residue. Not phosphorylated in vitro by CPK33. In terms of tissue distribution, expressed at high levels in chloroplast-containing parenchymatic cells of leaves, inflorescence shoots and flowers, and at lower levels in the vascular system. In young plants, detected in roots and shoots including cotyledons, leaves and hypocotyls. Also observed in apical meristematic regions, siliques and embryos. Low expression in roots, limited to the vascular tissue. Broadly expressed in roots, cotyledons, leaves, hypocotyls, inflorescences, siliques, and strongly in guard cells.

Its subcellular location is the plastid. It is found in the chloroplast. The protein resides in the mitochondrion. It localises to the cell membrane. It catalyses the reaction [ADP-thiazole synthase]-L-cysteine + glycine + NAD(+) = [ADP-thiazole synthase]-dehydroalanine + ADP-5-ethyl-4-methylthiazole-2-carboxylate + nicotinamide + 3 H2O + 2 H(+). Functionally, involved in biosynthesis of the thiamine precursor thiazole. Catalyzes the conversion of NAD and glycine to adenosine diphosphate 5-(2-hydroxyethyl)-4-methylthiazole-2-carboxylic acid (ADT), an adenylated thiazole intermediate. The reaction includes an iron-dependent sulfide transfer from a conserved cysteine residue of the protein to a thiazole intermediate. The enzyme can only undergo a single turnover, which suggests it is a suicide enzyme. May have additional roles in adaptation to various stress conditions and in DNA damage tolerance. Acts as a positive regulator for the abscisic acid-induced activation of slow type anion channels during stomatal closure by repressing CPK33 kinase activity. This chain is Thiamine thiazole synthase, chloroplastic, found in Arabidopsis thaliana (Mouse-ear cress).